The primary structure comprises 120 residues: MPESLLPLDRLMTTLRTRAAERPEGSYTTKLMNGGAEAIGRKIREEAEELIEAADEPDEAGRQHAIYEAGDLIYHAMVLMAWRGIELDEVAAELARREGTSGLVEKASRPAKKDSGTADS.

Positions 97–120 are disordered; it reads REGTSGLVEKASRPAKKDSGTADS. Residues 106-120 show a composition bias toward basic and acidic residues; sequence KASRPAKKDSGTADS.

The protein belongs to the PRA-PH family.

It is found in the cytoplasm. It catalyses the reaction 1-(5-phospho-beta-D-ribosyl)-ATP + H2O = 1-(5-phospho-beta-D-ribosyl)-5'-AMP + diphosphate + H(+). It participates in amino-acid biosynthesis; L-histidine biosynthesis; L-histidine from 5-phospho-alpha-D-ribose 1-diphosphate: step 2/9. This Rhodopirellula baltica (strain DSM 10527 / NCIMB 13988 / SH1) protein is Phosphoribosyl-ATP pyrophosphatase.